Reading from the N-terminus, the 432-residue chain is uncharacterized protein (432 aa).

Over residues 1-18 the composition is skewed to basic residues; sequence MAIGDKRKKNRKNKQNKK. 3 disordered regions span residues 1–23, 37–56, and 122–168; these read MAIG…KNDN, NSNS…NGNG, and STNS…GSSL. Low complexity-rich tracts occupy residues 37-53, 122-147, and 154-168; these read NSNS…NNKN, STNS…QQQQ, and ESQS…GSSL. The stretch at 181-226 forms a coiled coil; that stretch reads LNDQLKIVQLEQKIVNLEKEIQRMRNEQNQIHKQNLNQYHELLKQI. Disordered stretches follow at residues 270-290 and 310-432; these read VQPV…KSNG and SSKF…STLR. The span at 274 to 288 shows a compositional bias: low complexity; it reads STPSSSSNSLASKKS. Residues 311-324 are compositionally biased toward polar residues; the sequence is SKFAQSNSSPSRVN. Residues 352-378 are compositionally biased toward low complexity; the sequence is KKSATTTTTSSSSNNATTTTAKGSTST. The segment covering 383–414 has biased composition (polar residues); sequence ITNSNNIKNSVLSPKSITKPNTPSNIIFSPLS.

This is an uncharacterized protein from Dictyostelium discoideum (Social amoeba).